A 149-amino-acid polypeptide reads, in one-letter code: D-aminoacyl-tRNA deacylase (149 aa).

A Gly-cisPro motif, important for rejection of L-amino acids motif is present at residues 137 to 138 (GP).

This sequence belongs to the DTD family. In terms of assembly, homodimer.

The protein localises to the cytoplasm. It catalyses the reaction glycyl-tRNA(Ala) + H2O = tRNA(Ala) + glycine + H(+). It carries out the reaction a D-aminoacyl-tRNA + H2O = a tRNA + a D-alpha-amino acid + H(+). In terms of biological role, an aminoacyl-tRNA editing enzyme that deacylates mischarged D-aminoacyl-tRNAs. Also deacylates mischarged glycyl-tRNA(Ala), protecting cells against glycine mischarging by AlaRS. Acts via tRNA-based rather than protein-based catalysis; rejects L-amino acids rather than detecting D-amino acids in the active site. By recycling D-aminoacyl-tRNA to D-amino acids and free tRNA molecules, this enzyme counteracts the toxicity associated with the formation of D-aminoacyl-tRNA entities in vivo and helps enforce protein L-homochirality. In Desulforamulus reducens (strain ATCC BAA-1160 / DSM 100696 / MI-1) (Desulfotomaculum reducens), this protein is D-aminoacyl-tRNA deacylase.